Consider the following 298-residue polypeptide: MSTNPLVWQQATVRIQQFYRLTKPRVVSLIVFTAVIGMFLSVPGAVPLDKLLLGTIGISLVAGAAAALNCLVEYKFDAIMARTKGRPLPQGKVSVPETLFFLVMVGGLGLFILHQWINPLTMWLTLGTFVGYAIIYTVILKPLTPQNIVIGGASGAMPPVLGWAAITGEISADALLLFLIIFAWTPPHFWALALYRKSDYAKIGMPMLPVTHGEEFTRLHVLLYTIILCIATVLPYLTQMSGLIYLVSVLILDAIFLYYAIRIYLHYTDQIAREAFRYSIIYLALLFTALLVDHYFYF.

The next 9 helical transmembrane spans lie at 26–46 (VVSL…PGAV), 52–72 (LLGT…NCLV), 93–113 (VSVP…LFIL), 120–140 (LTMW…TVIL), 148–168 (IVIG…AITG), 174–194 (ALLL…ALAL), 219–239 (LHVL…YLTQ), 241–261 (SGLI…YYAI), and 278–298 (YSII…YFYF).

The protein belongs to the UbiA prenyltransferase family. Protoheme IX farnesyltransferase subfamily.

The protein localises to the cell inner membrane. The catalysed reaction is heme b + (2E,6E)-farnesyl diphosphate + H2O = Fe(II)-heme o + diphosphate. It functions in the pathway porphyrin-containing compound metabolism; heme O biosynthesis; heme O from protoheme: step 1/1. Converts heme B (protoheme IX) to heme O by substitution of the vinyl group on carbon 2 of heme B porphyrin ring with a hydroxyethyl farnesyl side group. In Nitrosomonas eutropha (strain DSM 101675 / C91 / Nm57), this protein is Protoheme IX farnesyltransferase.